The chain runs to 482 residues: PAN domain-containing protein At5g03700 (482 aa).

An N-terminal signal peptide occupies residues 1-31 (MEGLCLNSFTRVLLLLFVFLVFSHKWQRVNA). One can recognise a PAN domain in the interval 330-411 (CDKTTEFKVV…SKLGYFKVRE (82 aa)). 2 disulfide bridges follow: cysteine 363–cysteine 385 and cysteine 367–cysteine 373. The helical transmembrane segment at 425 to 445 (GMSLLAVIALVLMVAMVYVGF) threads the bilayer.

Its subcellular location is the membrane. The polypeptide is PAN domain-containing protein At5g03700 (Arabidopsis thaliana (Mouse-ear cress)).